Reading from the N-terminus, the 284-residue chain is F-box protein PP2-B13 (284 aa).

The F-box domain maps to 1–44 (MMMLPEACVANILAFTSPADAFSSSEVSSVFRLAGDSDFVWEKF).

This is F-box protein PP2-B13 (PP2B13) from Arabidopsis thaliana (Mouse-ear cress).